The sequence spans 453 residues: UDP-N-acetylmuramoylalanine--D-glutamate ligase (453 aa).

An ATP-binding site is contributed by 117 to 123 (GSNGKST).

Belongs to the MurCDEF family.

It localises to the cytoplasm. It catalyses the reaction UDP-N-acetyl-alpha-D-muramoyl-L-alanine + D-glutamate + ATP = UDP-N-acetyl-alpha-D-muramoyl-L-alanyl-D-glutamate + ADP + phosphate + H(+). The protein operates within cell wall biogenesis; peptidoglycan biosynthesis. In terms of biological role, cell wall formation. Catalyzes the addition of glutamate to the nucleotide precursor UDP-N-acetylmuramoyl-L-alanine (UMA). In Chromobacterium violaceum (strain ATCC 12472 / DSM 30191 / JCM 1249 / CCUG 213 / NBRC 12614 / NCIMB 9131 / NCTC 9757 / MK), this protein is UDP-N-acetylmuramoylalanine--D-glutamate ligase.